The chain runs to 325 residues: Heat-inducible transcription repressor HrcA (325 aa).

This sequence belongs to the HrcA family.

Its function is as follows. Negative regulator of class I heat shock genes (grpE-dnaK-dnaJ and groELS operons). Prevents heat-shock induction of these operons. This chain is Heat-inducible transcription repressor HrcA, found in Staphylococcus aureus (strain JH1).